The chain runs to 383 residues: ATP phosphoribosyltransferase regulatory subunit (383 aa).

The protein belongs to the class-II aminoacyl-tRNA synthetase family. HisZ subfamily. As to quaternary structure, heteromultimer composed of HisG and HisZ subunits.

It localises to the cytoplasm. Its pathway is amino-acid biosynthesis; L-histidine biosynthesis; L-histidine from 5-phospho-alpha-D-ribose 1-diphosphate: step 1/9. Required for the first step of histidine biosynthesis. May allow the feedback regulation of ATP phosphoribosyltransferase activity by histidine. The sequence is that of ATP phosphoribosyltransferase regulatory subunit from Lactiplantibacillus plantarum (strain ATCC BAA-793 / NCIMB 8826 / WCFS1) (Lactobacillus plantarum).